We begin with the raw amino-acid sequence, 340 residues long: Immunoglobulin-binding protein 1 (340 aa).

A UIM domain is found at 47-61 (LELLEKAAGMLSQLD). The interaction with PPP2CA stretch occupies residues 99-203 (RLDHLQRARE…YLLHLRRWIG (105 aa)). Disordered regions lie at residues 221–242 (DKDS…PPMK) and 281–340 (LPDR…QNMG). Positions 226 to 291 (REESACQSSL…PDRGIAKPPS (66 aa)) are interaction with MID1. Residue K242 is modified to N6-acetyllysine. Positions 292–301 (ADFQRAAQQQ) are enriched in low complexity. The span at 302 to 312 (EDQEQKDEENE) shows a compositional bias: acidic residues. Positions 313–330 (EKALHRMREWDDWKDTHP) are enriched in basic and acidic residues.

The protein belongs to the IGBP1/TAP42 family. Interacts with partially folded PPP2CA, but not with the fully active protein. Interacts with PPP2CB, and with PP4 and PP6. Interacts with MID1 and MID2. Interacts with ubiquitin. Post-translationally, phosphorylated. In terms of processing, monoubiquitination by MID1 triggers calpain-mediated cleavage and switches IGBP1 activity from protective to destructive.

It is found in the cytoplasm. Functionally, associated to surface IgM-receptor; may be involved in signal transduction. Involved in regulation of the catalytic activity of the phosphatases PP2A, PP4 and PP6 by protecting their partially folded catalytic subunits from degradative polyubiquitination until they associate with regulatory subunits. The protein is Immunoglobulin-binding protein 1 (Igbp1) of Rattus norvegicus (Rat).